We begin with the raw amino-acid sequence, 166 residues long: Cofilin-2 (166 aa).

Ala-2 is subject to N-acetylalanine. At Ser-3 the chain carries Phosphoserine. An ADF-H domain is found at 4-153 (GVTVNDEVIK…KDRSTLGEKL (150 aa)). Thr-6 carries the post-translational modification Phosphothreonine. Positions 30 to 34 (KKRKK) match the Nuclear localization signal motif.

Belongs to the actin-binding proteins ADF family. As to quaternary structure, interacts with CSRP3; possibly two molecules of CFL2 can interact with one molecule if CSRP3. Post-translationally, the phosphorylation of Ser-24 may prevent recognition of the nuclear localization signal. Predominantly expressed in skeletal muscle.

Its subcellular location is the nucleus matrix. It localises to the cytoplasm. The protein resides in the cytoskeleton. Controls reversibly actin polymerization and depolymerization in a pH-sensitive manner. It has the ability to bind G- and F-actin in a 1:1 ratio of cofilin to actin. It is the major component of intranuclear and cytoplasmic actin rods. Required for muscle maintenance. May play a role during the exchange of alpha-actin forms during the early postnatal remodeling of the sarcomere. This chain is Cofilin-2 (Cfl2), found in Mus musculus (Mouse).